The chain runs to 616 residues: Chaperone protein DnaK (616 aa).

Position 174 is a phosphothreonine; by autocatalysis (Thr-174). Residues 576–616 (QASAPGAGPEGASGGFGGENKKDDNVVDADYTVIDDDKKKT) are disordered. Residues 583-593 (GPEGASGGFGG) show a composition bias toward gly residues.

It belongs to the heat shock protein 70 family.

Acts as a chaperone. This is Chaperone protein DnaK from Heliobacterium modesticaldum (strain ATCC 51547 / Ice1).